A 1491-amino-acid chain; its full sequence is CLIP-associating protein (1491 aa).

HEAT repeat units follow at residues 44–82 (CTDM…RLGS), 85–123 (NAYT…HRVL), 163–201 (QLSV…HVGD), and 402–440 (DAFC…YTHA). Disordered stretches follow at residues 537–586 (RERE…AVDT) and 600–739 (LYSR…NNPV). Over residues 542-551 (GGGGGTGTGT) the composition is skewed to gly residues. The span at 569-580 (GTLQKPTPSMRS) shows a compositional bias: polar residues. Ser582, Ser626, and Ser634 each carry phosphoserine. Residues 632-646 (LNSNSGGTPATTPGS) show a composition bias toward polar residues. At Thr648 the chain carries Phosphothreonine. Polar residues-rich tracts occupy residues 657–671 (VSQS…SPST) and 699–712 (PRST…SPTR). 5 positions are modified to phosphoserine: Ser806, Ser817, Ser820, Ser822, and Ser824. HEAT repeat units follow at residues 874–912 (QQQL…VHAN) and 955–993 (QLQL…TYCK). Disordered stretches follow at residues 1065–1127 (HMRR…SVEQ) and 1167–1205 (GHLQ…ESAT). Low complexity-rich tracts occupy residues 1070-1097 (SQSC…QSPS), 1111-1124 (LSIS…RQSS), and 1181-1200 (ASLS…QSNT). Phosphoserine is present on residues Ser1120, Ser1123, and Ser1124. HEAT repeat units follow at residues 1289–1327 (NKHF…SNKM) and 1408–1446 (DAHL…VLGE).

Belongs to the CLASP family. As to quaternary structure, interacts with CLIP-190 and microtubules. In terms of tissue distribution, expressed in testis and ovary.

Its subcellular location is the cytoplasm. It localises to the cytoskeleton. The protein localises to the nucleus. The protein resides in the microtubule organizing center. It is found in the centrosome. Its subcellular location is the spindle. It localises to the cell projection. The protein localises to the growth cone. The protein resides in the cleavage furrow. In terms of biological role, microtubule plus-end tracking protein that promotes the stabilization of dynamic microtubules. Required for several aspects of mitotic spindle formation including the formation of the overlapping central spindle microtubules and kinetochore attachment. Required for the incorporation of tubulin subunits at the plus ends of kinetochore microtubules during poleward microtubule flux. Acts antagonistically to Klp10A and Klp67A to maintain metaphase spindle length. Also required for guidance of CNS axons downstream of Abl. May function to identify a subset of microtubules that probe the peripheral growth cone domain, where guidance signals exert their influence on cytoskeletal organization. Also required during oogenesis for the organization of the polarized microtubule network inside the 16-cell cyst that ensures oocyte differentiation. This chain is CLIP-associating protein (chb), found in Drosophila melanogaster (Fruit fly).